A 294-amino-acid chain; its full sequence is MEIRRRPPNPKVRVAHLEYAVPHDDEAPRHILEEIVWEKDREVAQARERVPLEKLKSQVAALPAPRDFVAALKASCRKPAVIAEVKKASPSKGVIREDFDPEAIAKAYAEGGASCLSVLTDKRFFQGGFEVLVQVRQVVDLPLLCKEFILSPYQLYQARAAGADAVLLIAAILTDQDISYLLKVARSLGLQVLLEVHDAAELERALGFEGVQLIGINNRDLTSFDTDLATTETLTATYGEQLRQSGALLVSESGLFSRDDLDRVQSAGADAVLVGEALMRQSDVQQALETLISG.

This sequence belongs to the TrpC family.

The catalysed reaction is 1-(2-carboxyphenylamino)-1-deoxy-D-ribulose 5-phosphate + H(+) = (1S,2R)-1-C-(indol-3-yl)glycerol 3-phosphate + CO2 + H2O. The protein operates within amino-acid biosynthesis; L-tryptophan biosynthesis; L-tryptophan from chorismate: step 4/5. This Synechococcus sp. (strain RCC307) protein is Indole-3-glycerol phosphate synthase.